The primary structure comprises 335 residues: Glycerol-3-phosphate dehydrogenase [NAD(P)+] (335 aa).

The NADPH site is built by Ser-10, Phe-11, Arg-31, and Lys-105. Sn-glycerol 3-phosphate is bound by residues Lys-105, Gly-136, and Ser-138. Ala-140 provides a ligand contact to NADPH. Residues Lys-191, Asp-244, Ser-254, Arg-255, and Asn-256 each coordinate sn-glycerol 3-phosphate. Lys-191 serves as the catalytic Proton acceptor. Arg-255 lines the NADPH pocket. NADPH contacts are provided by Val-279 and Glu-281.

Belongs to the NAD-dependent glycerol-3-phosphate dehydrogenase family.

It is found in the cytoplasm. It catalyses the reaction sn-glycerol 3-phosphate + NAD(+) = dihydroxyacetone phosphate + NADH + H(+). It carries out the reaction sn-glycerol 3-phosphate + NADP(+) = dihydroxyacetone phosphate + NADPH + H(+). The protein operates within membrane lipid metabolism; glycerophospholipid metabolism. Catalyzes the reduction of the glycolytic intermediate dihydroxyacetone phosphate (DHAP) to sn-glycerol 3-phosphate (G3P), the key precursor for phospholipid synthesis. The protein is Glycerol-3-phosphate dehydrogenase [NAD(P)+] of Myxococcus xanthus (strain DK1622).